Here is a 157-residue protein sequence, read N- to C-terminus: Chromophore lyase CpcS/CpeS 1 (157 aa).

The protein belongs to the CpcS/CpeS biliprotein lyase family.

Its subcellular location is the plastid. It localises to the organellar chromatophore. In terms of biological role, covalently attaches a chromophore to Cys residue(s) of phycobiliproteins. This is Chromophore lyase CpcS/CpeS 1 from Paulinella chromatophora.